Consider the following 177-residue polypeptide: Large ribosomal subunit protein uL6 (177 aa).

The disordered stretch occupies residues 151–177 (LRPPEPYKGKGVRYAGENVRRKEGKKK).

The protein belongs to the universal ribosomal protein uL6 family. Part of the 50S ribosomal subunit.

This protein binds to the 23S rRNA, and is important in its secondary structure. It is located near the subunit interface in the base of the L7/L12 stalk, and near the tRNA binding site of the peptidyltransferase center. The sequence is that of Large ribosomal subunit protein uL6 from Phenylobacterium zucineum (strain HLK1).